The sequence spans 303 residues: Recombination-associated protein RdgC (303 aa).

It belongs to the RdgC family.

The protein localises to the cytoplasm. Its subcellular location is the nucleoid. In terms of biological role, may be involved in recombination. The protein is Recombination-associated protein RdgC of Shewanella frigidimarina (strain NCIMB 400).